Consider the following 440-residue polypeptide: Proline--tRNA ligase (440 aa).

The protein belongs to the class-II aminoacyl-tRNA synthetase family. ProS type 2 subfamily. Homodimer.

The protein localises to the cytoplasm. The catalysed reaction is tRNA(Pro) + L-proline + ATP = L-prolyl-tRNA(Pro) + AMP + diphosphate. Catalyzes the attachment of proline to tRNA(Pro) in a two-step reaction: proline is first activated by ATP to form Pro-AMP and then transferred to the acceptor end of tRNA(Pro). This chain is Proline--tRNA ligase, found in Rhizobium johnstonii (strain DSM 114642 / LMG 32736 / 3841) (Rhizobium leguminosarum bv. viciae).